The sequence spans 278 residues: MGIKIDGKRLAQDIREELKKQVENINNNEDVKLCMANILVGNDGGSQFYVRNQNKLCHALGIKVKNINLDECIKEEELLNIINELNNDNEVKGIILQLPLPKHLDESKITSAIDINKDIDGLSSISVGKLYKGEKCFVPCTPRGIIELIKTCDIDIEGSNAVVIGRSNIVGKPVAQLLLNENATVTICHSKTKNLKEICLNADILVSAIGKPHFITKDYVKEGAVVIDVGTSSVNGKMVGDVCFDEVIEKAAYVTPVPGGVGAMTTTMLIKNLCEGLK.

Residues 165-167 (GRS), S190, and T231 each bind NADP(+).

The protein belongs to the tetrahydrofolate dehydrogenase/cyclohydrolase family. As to quaternary structure, homodimer.

The enzyme catalyses (6R)-5,10-methylene-5,6,7,8-tetrahydrofolate + NADP(+) = (6R)-5,10-methenyltetrahydrofolate + NADPH. It carries out the reaction (6R)-5,10-methenyltetrahydrofolate + H2O = (6R)-10-formyltetrahydrofolate + H(+). The protein operates within one-carbon metabolism; tetrahydrofolate interconversion. Functionally, catalyzes the oxidation of 5,10-methylenetetrahydrofolate to 5,10-methenyltetrahydrofolate and then the hydrolysis of 5,10-methenyltetrahydrofolate to 10-formyltetrahydrofolate. The sequence is that of Bifunctional protein FolD from Clostridium novyi (strain NT).